The primary structure comprises 388 residues: 4-hydroxy-3-methylbut-2-en-1-yl diphosphate synthase (flavodoxin) (388 aa).

Residues C280, C283, C315, and E322 each contribute to the [4Fe-4S] cluster site. The disordered stretch occupies residues 369–388; the sequence is MNSEGGPEATSSGSPVVTVS. Positions 377 to 388 are enriched in polar residues; it reads ATSSGSPVVTVS.

Belongs to the IspG family. Requires [4Fe-4S] cluster as cofactor.

The catalysed reaction is (2E)-4-hydroxy-3-methylbut-2-enyl diphosphate + oxidized [flavodoxin] + H2O + 2 H(+) = 2-C-methyl-D-erythritol 2,4-cyclic diphosphate + reduced [flavodoxin]. The protein operates within isoprenoid biosynthesis; isopentenyl diphosphate biosynthesis via DXP pathway; isopentenyl diphosphate from 1-deoxy-D-xylulose 5-phosphate: step 5/6. In terms of biological role, converts 2C-methyl-D-erythritol 2,4-cyclodiphosphate (ME-2,4cPP) into 1-hydroxy-2-methyl-2-(E)-butenyl 4-diphosphate. In Mycolicibacterium paratuberculosis (strain ATCC BAA-968 / K-10) (Mycobacterium paratuberculosis), this protein is 4-hydroxy-3-methylbut-2-en-1-yl diphosphate synthase (flavodoxin).